The following is a 613-amino-acid chain: RNA polymerase sigma factor RpoD (613 aa).

A sigma-70 factor domain-1 region spans residues 2 to 80 (EQNPQSQLKL…TADEDAAEAA (79 aa)). Residues 176-213 (PTATHVGSELSQEDLDDDEDEDEEDGDDDSADDDNSID) are disordered. Acidic residues predominate over residues 186-212 (SQEDLDDDEDEDEEDGDDDSADDDNSI). A sigma-70 factor domain-2 region spans residues 379 to 449 (MVEANLRLVI…TRSIADQART (71 aa)). The Interaction with polymerase core subunit RpoC signature appears at 403 to 406 (DLIQ). Residues 458-534 (ETINKLNRIS…DTTLELPLDS (77 aa)) form a sigma-70 factor domain-3 region. Residues 547–600 (VLAGLTAREAKVLRMRFGIDMNTDYTLEEVGKQFDVTRERIRQIEAKALRKLRH) form a sigma-70 factor domain-4 region. Positions 573–592 (LEEVGKQFDVTRERIRQIEA) form a DNA-binding region, H-T-H motif. Residues 584–599 (RERIRQIEAKALRKLR) form an interaction with anti-sigma factors region.

The protein belongs to the sigma-70 factor family. RpoD/SigA subfamily. As to quaternary structure, interacts transiently with the RNA polymerase catalytic core formed by RpoA, RpoB, RpoC and RpoZ (2 alpha, 1 beta, 1 beta' and 1 omega subunit) to form the RNA polymerase holoenzyme that can initiate transcription. Identified in a complex containing RpoD, the RNA polymerase subunits RpoA, RpoB and RpoZ, CRP and DNA. Interacts with Rsd; this prevents interaction with the RNA polymerase catalytic core and with promoter DNA, and as a consequence, promotes transcription from promoters that require alternative sigma factors. Interacts with phage T4 AsiA; this interferes with binding to DNA and to the RNA polymerase. In terms of assembly, (Microbial infection) Interacts with Escherichia phage lambda antitermination protein Q.

Its subcellular location is the cytoplasm. Sigma factors are initiation factors that promote the attachment of RNA polymerase to specific initiation sites and are then released. This sigma factor is the primary sigma factor during exponential growth. Preferentially transcribes genes associated with fast growth, such as ribosomal operons, other protein-synthesis related genes, rRNA- and tRNA-encoding genes and prfB. The protein is RNA polymerase sigma factor RpoD of Escherichia coli (strain K12).